The sequence spans 934 residues: uncharacterized protein (934 aa).

An N-terminal signal peptide occupies residues 1–24; that stretch reads MKLKKRYLLLGSTLTVSAALILSA. Cysteine 25 carries N-palmitoyl cysteine lipidation. A lipid anchor (S-diacylglycerol cysteine) is attached at cysteine 25. A disordered region spans residues 111–131; that stretch reads SGLKGRAQKNGSTDSSDGSSK. The span at 119–131 shows a compositional bias: polar residues; that stretch reads KNGSTDSSDGSSK.

It is found in the cell membrane. This is an uncharacterized protein from Mycoplasma genitalium (strain ATCC 33530 / DSM 19775 / NCTC 10195 / G37) (Mycoplasmoides genitalium).